The following is a 227-amino-acid chain: 2,3-bisphosphoglycerate-dependent phosphoglycerate mutase (227 aa).

Substrate-binding positions include 7–14, 20–21, R59, 86–89, K97, 113–114, and 182–183; these read RHGFSEWN, TG, ERHY, RR, and GN. H8 functions as the Tele-phosphohistidine intermediate in the catalytic mechanism. E86 functions as the Proton donor/acceptor in the catalytic mechanism.

The protein belongs to the phosphoglycerate mutase family. BPG-dependent PGAM subfamily. As to quaternary structure, homodimer.

The enzyme catalyses (2R)-2-phosphoglycerate = (2R)-3-phosphoglycerate. It participates in carbohydrate degradation; glycolysis; pyruvate from D-glyceraldehyde 3-phosphate: step 3/5. Its function is as follows. Catalyzes the interconversion of 2-phosphoglycerate and 3-phosphoglycerate. The sequence is that of 2,3-bisphosphoglycerate-dependent phosphoglycerate mutase from Haemophilus influenzae (strain ATCC 51907 / DSM 11121 / KW20 / Rd).